The chain runs to 215 residues: 3-demethoxyubiquinol 3-hydroxylase (215 aa).

Fe cation-binding residues include Glu64, Glu94, His97, Glu146, Glu178, and His181.

Belongs to the COQ7 family. The cofactor is Fe cation.

It is found in the cell membrane. It catalyses the reaction a 5-methoxy-2-methyl-3-(all-trans-polyprenyl)benzene-1,4-diol + AH2 + O2 = a 3-demethylubiquinol + A + H2O. It participates in cofactor biosynthesis; ubiquinone biosynthesis. Its function is as follows. Catalyzes the hydroxylation of 2-nonaprenyl-3-methyl-6-methoxy-1,4-benzoquinol during ubiquinone biosynthesis. In Pseudomonas fluorescens (strain SBW25), this protein is 3-demethoxyubiquinol 3-hydroxylase.